Consider the following 664-residue polypeptide: DNA ligase (664 aa).

NAD(+)-binding positions include 32-36 (DKDYD) and 80-81 (SL). The active-site N6-AMP-lysine intermediate is Lys-122. NAD(+)-binding residues include Arg-144, Glu-178, and Lys-314. Residues Cys-407, Cys-410, Cys-423, and Cys-429 each coordinate Zn(2+). One can recognise a BRCT domain in the interval 587 to 664 (IKENIFNGKT…SEEDFKNMIG (78 aa)).

The protein belongs to the NAD-dependent DNA ligase family. LigA subfamily. Mg(2+) serves as cofactor. The cofactor is Mn(2+).

It carries out the reaction NAD(+) + (deoxyribonucleotide)n-3'-hydroxyl + 5'-phospho-(deoxyribonucleotide)m = (deoxyribonucleotide)n+m + AMP + beta-nicotinamide D-nucleotide.. In terms of biological role, DNA ligase that catalyzes the formation of phosphodiester linkages between 5'-phosphoryl and 3'-hydroxyl groups in double-stranded DNA using NAD as a coenzyme and as the energy source for the reaction. It is essential for DNA replication and repair of damaged DNA. This is DNA ligase from Clostridium novyi (strain NT).